Here is a 354-residue protein sequence, read N- to C-terminus: 3-isopropylmalate dehydrogenase (354 aa).

76-87 (GPRWDGAKERPE) contacts NAD(+). Residues R94, R104, R130, and D215 each contribute to the substrate site. 3 residues coordinate Mg(2+): D215, D239, and D243. Residue 273–285 (GSAPDIAGKNKAN) participates in NAD(+) binding.

The protein belongs to the isocitrate and isopropylmalate dehydrogenases family. LeuB type 1 subfamily. Homodimer. Mg(2+) is required as a cofactor. Requires Mn(2+) as cofactor.

The protein localises to the cytoplasm. It carries out the reaction (2R,3S)-3-isopropylmalate + NAD(+) = 4-methyl-2-oxopentanoate + CO2 + NADH. Its pathway is amino-acid biosynthesis; L-leucine biosynthesis; L-leucine from 3-methyl-2-oxobutanoate: step 3/4. Its function is as follows. Catalyzes the oxidation of 3-carboxy-2-hydroxy-4-methylpentanoate (3-isopropylmalate) to 3-carboxy-4-methyl-2-oxopentanoate. The product decarboxylates to 4-methyl-2 oxopentanoate. The polypeptide is 3-isopropylmalate dehydrogenase (Bacillus cereus (strain ZK / E33L)).